The chain runs to 149 residues: MFSPQSRLRHAVADTFAMVVYCSVVNMLIEIFLSGMTFEQSLSSRLVAIPVNILIAWPYGMYRDAIMRVARKASPASWVKNLADVLAYVTFQSPVYVAILLTVGADWHQITAAVSSNIVISMLMGAVYGYFLDYCRRLFKVSSYHQAKA.

4 helical membrane-spanning segments follow: residues 16-36, 46-66, 85-105, and 112-132; these read FAMV…LSGM, LVAI…RDAI, VLAY…TVGA, and AAVS…GYFL.

This sequence belongs to the AlaE exporter family.

It localises to the cell inner membrane. Exports L-alanine. The protein is L-alanine exporter AlaE of Citrobacter koseri (strain ATCC BAA-895 / CDC 4225-83 / SGSC4696).